Reading from the N-terminus, the 84-residue chain is Sulfur carrier protein TusA (84 aa).

Catalysis depends on Cys21, which acts as the Cysteine persulfide intermediate.

Belongs to the sulfur carrier protein TusA family.

It is found in the cytoplasm. Its function is as follows. Sulfur carrier protein which probably makes part of a sulfur-relay system. The protein is Sulfur carrier protein TusA of Pseudomonas syringae pv. syringae (strain B728a).